We begin with the raw amino-acid sequence, 117 residues long: Ribosome-binding factor A (117 aa).

This sequence belongs to the RbfA family. As to quaternary structure, monomer. Binds 30S ribosomal subunits, but not 50S ribosomal subunits or 70S ribosomes.

The protein localises to the cytoplasm. In terms of biological role, one of several proteins that assist in the late maturation steps of the functional core of the 30S ribosomal subunit. Associates with free 30S ribosomal subunits (but not with 30S subunits that are part of 70S ribosomes or polysomes). Required for efficient processing of 16S rRNA. May interact with the 5'-terminal helix region of 16S rRNA. The protein is Ribosome-binding factor A of Leptospira interrogans serogroup Icterohaemorrhagiae serovar copenhageni (strain Fiocruz L1-130).